The following is a 267-amino-acid chain: Small ribosomal subunit protein uS2 (267 aa).

The segment at 234–267 (DNAEEELAEAISQEEPSAAEELPDDMADNENEFE) is disordered. Residues 250–267 (SAAEELPDDMADNENEFE) are compositionally biased toward acidic residues.

It belongs to the universal ribosomal protein uS2 family.

The polypeptide is Small ribosomal subunit protein uS2 (Dichelobacter nodosus (strain VCS1703A)).